A 717-amino-acid polypeptide reads, in one-letter code: Choline transporter-like protein 5 (717 aa).

The disordered stretch occupies residues 1–24 (MNDTEKPADTASEEEDFGDPRTYD). Residues 1–38 (MNDTEKPADTASEEEDFGDPRTYDPDFKGPVSNRSCTD) are Cytoplasmic-facing. The helical transmembrane segment at 39 to 59 (VLCCMIFLLCIVGYIVLGLVA) threads the bilayer. Topologically, residues 60-242 (WVHGDPRRAA…KVFEDYATTW (183 aa)) are extracellular. Asparagine 88 and asparagine 190 each carry an N-linked (GlcNAc...) asparagine glycan. The chain crosses the membrane as a helical span at residues 243–263 (YWILIGLMIAMVLSWIFLILL). The Cytoplasmic segment spans residues 264–265 (RF). The chain crosses the membrane as a helical span at residues 266–286 (IAGCLFWVFMIGVIGIIGYGI). Residues 287–325 (WHCYQQYTNLQEHPRSVLTVYDIGIQTNISMYFELQQTW) lie on the Extracellular side of the membrane. Residue asparagine 314 is glycosylated (N-linked (GlcNAc...) asparagine). Residues 326 to 346 (FTLMIILCIIEVIVILMLIFL) traverse the membrane as a helical segment. Residues 347–351 (RNRIR) are Cytoplasmic-facing. Residues 352 to 372 (VAIILLKEGSKAIGYVPSTLV) form a helical membrane-spanning segment. Over 373–374 (YP) the chain is Extracellular. The helical transmembrane segment at 375-395 (ALTFILLSICICYWVVTAVFL) threads the bilayer. Over 396–460 (ATSGVPVYKV…QYIPTFHVYN (65 aa)) the chain is Cytoplasmic. The helical transmembrane segment at 461–481 (LFVFLWLINFVIALGQCALAG) threads the bilayer. Residues 482–515 (AFATYYWAMKKPDDIPRYPLFTAFGRAIRYHTGS) lie on the Extracellular side of the membrane. Residues 516–536 (LAFGSLIIALIQMFKIVLEYL) traverse the membrane as a helical segment. At 537-610 (NHRLKRTENT…KVAVTDEVTY (74 aa)) the chain is on the cytoplasmic side. The chain crosses the membrane as a helical span at residues 611 to 631 (FVLFLGKILVAGSIGVLAFLF). Over 632–649 (FTQRLPVIAQGPASLNYY) the chain is Extracellular. Residues 650–670 (WVPLLTVILGSYLIAHGFFSV) traverse the membrane as a helical segment. At 671–717 (YAMCVETIFICFLEDLERNDGSTARPYYVSQPLLKIFQEENLQTKQQ) the chain is on the cytoplasmic side.

It belongs to the CTL (choline transporter-like) family.

Its subcellular location is the cell membrane. It catalyses the reaction choline(out) + n H(+)(in) = choline(in) + n H(+)(out). In terms of biological role, choline/H+ antiporter. This Macaca fascicularis (Crab-eating macaque) protein is Choline transporter-like protein 5 (SLC44A5).